We begin with the raw amino-acid sequence, 290 residues long: 4-hydroxy-tetrahydrodipicolinate synthase (290 aa).

Residue T44 participates in pyruvate binding. The active-site Proton donor/acceptor is Y132. Residue K160 is the Schiff-base intermediate with substrate of the active site. Residue I202 participates in pyruvate binding.

Belongs to the DapA family. As to quaternary structure, homotetramer; dimer of dimers.

The protein localises to the cytoplasm. The catalysed reaction is L-aspartate 4-semialdehyde + pyruvate = (2S,4S)-4-hydroxy-2,3,4,5-tetrahydrodipicolinate + H2O + H(+). Its pathway is amino-acid biosynthesis; L-lysine biosynthesis via DAP pathway; (S)-tetrahydrodipicolinate from L-aspartate: step 3/4. In terms of biological role, catalyzes the condensation of (S)-aspartate-beta-semialdehyde [(S)-ASA] and pyruvate to 4-hydroxy-tetrahydrodipicolinate (HTPA). The sequence is that of 4-hydroxy-tetrahydrodipicolinate synthase from Geotalea uraniireducens (strain Rf4) (Geobacter uraniireducens).